Here is a 634-residue protein sequence, read N- to C-terminus: Chaperone protein HtpG (634 aa).

The segment at 1-342 (MTVETDKQTL…SSDLSLNVSR (342 aa)) is a; substrate-binding. Positions 343 to 559 (EILQSGPVVD…QGDLGLQMRQ (217 aa)) are b. The c stretch occupies residues 560–634 (LLEASGQAVP…LNKLLLELSA (75 aa)).

Belongs to the heat shock protein 90 family. As to quaternary structure, homodimer.

Its subcellular location is the cytoplasm. In terms of biological role, molecular chaperone. Has ATPase activity. The polypeptide is Chaperone protein HtpG (Xanthomonas axonopodis pv. citri (strain 306)).